The sequence spans 327 residues: Probable serine/threonine-protein kinase WNK5 (327 aa).

A disordered region spans residues 1–48 (MPPNPTPPRRATTTTTRATSGVRRGEEEQGGMAVSASAGEEEEAFEEV). A compositionally biased stretch (low complexity) spans 9 to 19 (RRATTTTTRAT). Residues 39–48 (GEEEEAFEEV) are compositionally biased toward acidic residues. The region spanning 55-314 (GRYADVLGLG…AAELLRDPFF (260 aa)) is the Protein kinase domain. ATP is bound at residue 136 to 139 (TEVC). Residue Asp-203 is the Proton acceptor of the active site.

It belongs to the protein kinase superfamily. Ser/Thr protein kinase family. WNK subfamily.

It carries out the reaction L-seryl-[protein] + ATP = O-phospho-L-seryl-[protein] + ADP + H(+). The catalysed reaction is L-threonyl-[protein] + ATP = O-phospho-L-threonyl-[protein] + ADP + H(+). The chain is Probable serine/threonine-protein kinase WNK5 (WNK5) from Oryza sativa subsp. japonica (Rice).